Reading from the N-terminus, the 87-residue chain is Defensin-like protein 223 (87 aa).

Positions 1-34 (MKSTIFVLTLLIFVSLYFNIIVYVSFSFIGTSEI) are cleaved as a signal peptide. 3 cysteine pairs are disulfide-bonded: C55-C72, C58-C77, and C62-C79.

The protein belongs to the DEFL family.

It localises to the secreted. The sequence is that of Defensin-like protein 223 from Arabidopsis thaliana (Mouse-ear cress).